Here is a 190-residue protein sequence, read N- to C-terminus: Flavodoxin-like domain-containing protein BilS (190 aa).

It functions in the pathway porphyrin-containing compound metabolism; protoheme degradation. Its function is as follows. Together with BilR, catalyzes reduction of mesobilirubin and/or bilirubin to urobilinogen, a key step during heme degradation. BilS is probably involved in electron transfer for the bilirubin reductase BilR. The polypeptide is Flavodoxin-like domain-containing protein BilS (Clostridium symbiosum (strain WAL-14163)).